A 141-amino-acid polypeptide reads, in one-letter code: Nucleoside diphosphate kinase (141 aa).

6 residues coordinate ATP: Lys-9, Phe-57, Arg-85, Thr-91, Arg-102, and Asn-112. Catalysis depends on His-115, which acts as the Pros-phosphohistidine intermediate.

It belongs to the NDK family. As to quaternary structure, homotetramer. The cofactor is Mg(2+).

The protein resides in the cytoplasm. It carries out the reaction a 2'-deoxyribonucleoside 5'-diphosphate + ATP = a 2'-deoxyribonucleoside 5'-triphosphate + ADP. It catalyses the reaction a ribonucleoside 5'-diphosphate + ATP = a ribonucleoside 5'-triphosphate + ADP. Its function is as follows. Major role in the synthesis of nucleoside triphosphates other than ATP. The ATP gamma phosphate is transferred to the NDP beta phosphate via a ping-pong mechanism, using a phosphorylated active-site intermediate. The chain is Nucleoside diphosphate kinase from Chlamydia caviae (strain ATCC VR-813 / DSM 19441 / 03DC25 / GPIC) (Chlamydophila caviae).